A 172-amino-acid chain; its full sequence is Trypsin inhibitor DE-3 (172 aa).

Intrachain disulfides connect Cys39-Cys83 and Cys132-Cys139.

Belongs to the protease inhibitor I3 (leguminous Kunitz-type inhibitor) family.

In terms of biological role, inhibition of trypsin. The sequence is that of Trypsin inhibitor DE-3 from Erythrina caffra (Kaffir tree).